The chain runs to 230 residues: Large ribosomal subunit protein uL1 (230 aa).

This sequence belongs to the universal ribosomal protein uL1 family. Part of the 50S ribosomal subunit.

Functionally, binds directly to 23S rRNA. The L1 stalk is quite mobile in the ribosome, and is involved in E site tRNA release. Protein L1 is also a translational repressor protein, it controls the translation of the L11 operon by binding to its mRNA. In Bradyrhizobium diazoefficiens (strain JCM 10833 / BCRC 13528 / IAM 13628 / NBRC 14792 / USDA 110), this protein is Large ribosomal subunit protein uL1.